A 201-amino-acid chain; its full sequence is Lipopolysaccharide core heptose(II)-phosphate phosphatase (201 aa).

The N-terminal stretch at 1–35 (MLAFTLRFIKNKRYLATLAGALVIIAGLTSQHAWS) is a signal peptide.

This sequence belongs to the phosphoglycerate mutase family. Ais subfamily.

It localises to the periplasm. It functions in the pathway bacterial outer membrane biogenesis; lipopolysaccharide metabolism. In terms of biological role, catalyzes the dephosphorylation of heptose(II) of the outer membrane lipopolysaccharide core. This Salmonella paratyphi A (strain AKU_12601) protein is Lipopolysaccharide core heptose(II)-phosphate phosphatase.